The chain runs to 692 residues: uncharacterized protein (692 aa).

Response regulatory domains lie at 9–130 and 139–255; these read RVLY…LRMC and RILI…EYRM. 2 positions are modified to 4-aspartylphosphate: D58 and D188. Positions 299–432 constitute a GGDEF domain; it reads GVHGLVIIDV…GGNQAHVWSA (134 aa). Positions 443–691 constitute an EAL domain; it reads ESVIKRLVST…SFDFQHMSHD (249 aa).

This is an uncharacterized protein from Thiocystis violacea.